The following is a 318-amino-acid chain: tRNA uridine(34) hydroxylase (318 aa).

Positions 123–217 (EDDDTVIIDA…YGKDPETKGE (95 aa)) constitute a Rhodanese domain. C177 (cysteine persulfide intermediate) is an active-site residue.

The protein belongs to the TrhO family.

The enzyme catalyses uridine(34) in tRNA + AH2 + O2 = 5-hydroxyuridine(34) in tRNA + A + H2O. In terms of biological role, catalyzes oxygen-dependent 5-hydroxyuridine (ho5U) modification at position 34 in tRNAs. This Staphylococcus aureus (strain USA300) protein is tRNA uridine(34) hydroxylase.